Reading from the N-terminus, the 108-residue chain is Protein YcgL (108 aa).

Residues 12 to 96 (MFCVIYRSSK…PPEDLLKQHL (85 aa)) form the YcgL domain.

In Escherichia coli O127:H6 (strain E2348/69 / EPEC), this protein is Protein YcgL.